We begin with the raw amino-acid sequence, 101 residues long: Small ribosomal subunit protein uS14 (101 aa).

This sequence belongs to the universal ribosomal protein uS14 family. Part of the 30S ribosomal subunit. Contacts proteins S3 and S10.

In terms of biological role, binds 16S rRNA, required for the assembly of 30S particles and may also be responsible for determining the conformation of the 16S rRNA at the A site. This chain is Small ribosomal subunit protein uS14, found in Shewanella halifaxensis (strain HAW-EB4).